We begin with the raw amino-acid sequence, 583 residues long: Cell division protein FtsZ (583 aa).

GTP-binding positions include 24 to 28, 111 to 113, E142, R146, and D190; these read GGGGN and GTG. 2 disordered regions span residues 391 to 425 and 510 to 583; these read HQQP…VQQA and TNSL…RQSN. Low complexity predominate over residues 412 to 425; sequence APAALRPAQPVQQA.

This sequence belongs to the FtsZ family. As to quaternary structure, homodimer. Polymerizes to form a dynamic ring structure in a strictly GTP-dependent manner. Interacts directly with several other division proteins.

The protein resides in the cytoplasm. Functionally, essential cell division protein that forms a contractile ring structure (Z ring) at the future cell division site. The regulation of the ring assembly controls the timing and the location of cell division. One of the functions of the FtsZ ring is to recruit other cell division proteins to the septum to produce a new cell wall between the dividing cells. Binds GTP and shows GTPase activity. The chain is Cell division protein FtsZ from Rhizobium radiobacter (Agrobacterium tumefaciens).